We begin with the raw amino-acid sequence, 514 residues long: Bifunctional purine biosynthesis protein PurH (514 aa).

In terms of domain architecture, MGS-like spans 1–142 (MLALLSVSDK…KNFRHVSVVV (142 aa)).

This sequence belongs to the PurH family.

The catalysed reaction is (6R)-10-formyltetrahydrofolate + 5-amino-1-(5-phospho-beta-D-ribosyl)imidazole-4-carboxamide = 5-formamido-1-(5-phospho-D-ribosyl)imidazole-4-carboxamide + (6S)-5,6,7,8-tetrahydrofolate. It carries out the reaction IMP + H2O = 5-formamido-1-(5-phospho-D-ribosyl)imidazole-4-carboxamide. The protein operates within purine metabolism; IMP biosynthesis via de novo pathway; 5-formamido-1-(5-phospho-D-ribosyl)imidazole-4-carboxamide from 5-amino-1-(5-phospho-D-ribosyl)imidazole-4-carboxamide (10-formyl THF route): step 1/1. It functions in the pathway purine metabolism; IMP biosynthesis via de novo pathway; IMP from 5-formamido-1-(5-phospho-D-ribosyl)imidazole-4-carboxamide: step 1/1. This Myxococcus xanthus (strain DK1622) protein is Bifunctional purine biosynthesis protein PurH.